Reading from the N-terminus, the 118-residue chain is Holo-[acyl-carrier-protein] synthase (118 aa).

Residues aspartate 9 and glutamate 52 each coordinate Mg(2+).

The protein belongs to the P-Pant transferase superfamily. AcpS family. It depends on Mg(2+) as a cofactor.

The protein localises to the cytoplasm. The enzyme catalyses apo-[ACP] + CoA = holo-[ACP] + adenosine 3',5'-bisphosphate + H(+). Transfers the 4'-phosphopantetheine moiety from coenzyme A to a Ser of acyl-carrier-protein. The sequence is that of Holo-[acyl-carrier-protein] synthase from Frankia casuarinae (strain DSM 45818 / CECT 9043 / HFP020203 / CcI3).